The primary structure comprises 226 residues: HTH-type transcriptional regulator Rv0324 (226 aa).

Residues 7-101 (RKAALLDQVA…LVQVVADEHL (95 aa)) enclose the HTH arsR-type domain. Positions 41 to 64 (VEAIATATGMNLTTASANLQALKS) form a DNA-binding region, H-T-H motif. The 90-residue stretch at 129–218 (EAGEVTLVDV…WRLAGLPVDE (90 aa)) folds into the Rhodanese domain. Cysteine 177 (cysteine persulfide intermediate) is an active-site residue.

Functionally, part of a regulatory network that coordinates tolerance to the antitubercular drug bedaquiline. This chain is HTH-type transcriptional regulator Rv0324, found in Mycobacterium tuberculosis (strain ATCC 25618 / H37Rv).